The sequence spans 839 residues: Probable beta-glucosidase I (839 aa).

Asparagine 197 is a glycosylation site (N-linked (GlcNAc...) asparagine). Aspartate 225 is an active-site residue. Positions 395–555 constitute a PA14 domain; that stretch reads DGKKGFSFRV…SQEELIAKAA (161 aa).

This sequence belongs to the glycosyl hydrolase 3 family.

The protein localises to the secreted. The enzyme catalyses Hydrolysis of terminal, non-reducing beta-D-glucosyl residues with release of beta-D-glucose.. It functions in the pathway glycan metabolism; cellulose degradation. Functionally, beta-glucosidases are one of a number of cellulolytic enzymes involved in the degradation of cellulosic biomass. Catalyzes the last step releasing glucose from the inhibitory cellobiose. The sequence is that of Probable beta-glucosidase I (bglI) from Aspergillus terreus (strain NIH 2624 / FGSC A1156).